A 620-amino-acid chain; its full sequence is Ferric/cupric reductase transmembrane component 7 (620 aa).

Topologically, residues 1–45 are extracellular; the sequence is MIEERDLVLSNGIHCIADIHSELYARLKKESQAVTPWVYQKQYGK. The helical transmembrane segment at 46–66 threads the bilayer; that stretch reads FVTYFVAVIIFLSLIKKLAFM. Residues 67–107 are Cytoplasmic-facing; that stretch reads YYDSSEEFLPEKKNSPTTPSVFLARIMTKLVAFNRYICYRK. Residues 108 to 128 traverse the membrane as a helical segment; that stretch reads FPTLIFSYLGIPTSVGTFLVV. Over 129–167 the chain is Extracellular; sequence MATTLYTLLYCFVPHPFYRPCAGFGSPPLSVRAGIMAIS. Residues 161–320 form the Ferric oxidoreductase domain; it reads AGIMAISLVS…LAVKGYLRPG (160 aa). Residues 168 to 188 form a helical membrane-spanning segment; the sequence is LVSFVFSLSGKINVIGWLVGL. The Cytoplasmic segment spans residues 189–194; it reads SYEKIN. The helical transmembrane segment at 195 to 215 threads the bilayer; it reads IYHQWASILCLFFSWVHVIPF. Residues H197 and H211 each coordinate heme. The Extracellular segment spans residues 216–237; that stretch reads LRQARHEGGYERMHQRWKASDM. Residues 238–258 form a helical membrane-spanning segment; the sequence is WRSGVPPILFLNLLWLSSLPI. Residues 259 to 265 lie on the Cytoplasmic side of the membrane; the sequence is ARRHFYE. The chain crosses the membrane as a helical span at residues 266–286; that stretch reads IFLQLHWILAVGFYISLFYHV. Heme contacts are provided by H271 and H285. Residues 287–292 lie on the Extracellular side of the membrane; sequence YPELNS. The helical transmembrane segment at 293 to 313 threads the bilayer; that stretch reads HMYLVATIVVWFAQLFYRLAV. Residues 314 to 620 are Cytoplasmic-facing; that stretch reads KGYLRPGRSF…CYLHSESFGY (307 aa). Residues 321-419 enclose the FAD-binding FR-type domain; sequence RSFMASTIAN…DGPYGGIERD (99 aa). 369 to 375 serves as a coordination point for FAD; the sequence is HPFSIFP. Residues 519-544 are disordered; that stretch reads SDQSDLAKREKDTEFGQDDTESNSTF. Over residues 523–532 the composition is skewed to basic and acidic residues; that stretch reads DLAKREKDTE.

It belongs to the ferric reductase (FRE) family. FAD serves as cofactor.

Its subcellular location is the cell membrane. The catalysed reaction is 2 a Fe(II)-siderophore + NADP(+) + H(+) = 2 a Fe(III)-siderophore + NADPH. Its function is as follows. Cell surface metalloreductase. May be involved in copper homeostasis. The chain is Ferric/cupric reductase transmembrane component 7 (FRE7) from Saccharomyces cerevisiae (strain YJM789) (Baker's yeast).